Reading from the N-terminus, the 206-residue chain is 2,3-bisphosphoglycerate-dependent phosphoglycerate mutase (206 aa).

Substrate is bound by residues 9–16 (RHGQSEWN), 22–23 (TG), arginine 61, 88–91 (ERDY), lysine 99, 115–116 (RR), and 159–160 (GN). Catalysis depends on histidine 10, which acts as the Tele-phosphohistidine intermediate. Glutamate 88 serves as the catalytic Proton donor/acceptor.

Belongs to the phosphoglycerate mutase family. BPG-dependent PGAM subfamily. As to quaternary structure, homodimer.

It catalyses the reaction (2R)-2-phosphoglycerate = (2R)-3-phosphoglycerate. It functions in the pathway carbohydrate degradation; glycolysis; pyruvate from D-glyceraldehyde 3-phosphate: step 3/5. In terms of biological role, catalyzes the interconversion of 2-phosphoglycerate and 3-phosphoglycerate. The sequence is that of 2,3-bisphosphoglycerate-dependent phosphoglycerate mutase from Bartonella bacilliformis (strain ATCC 35685 / KC583 / Herrer 020/F12,63).